The chain runs to 524 residues: uncharacterized protein (524 aa).

A helical transmembrane segment spans residues 13-33 (EFILLILGMTVVGIVITMGLV).

The protein localises to the membrane. This is an uncharacterized protein from Methanocaldococcus jannaschii (strain ATCC 43067 / DSM 2661 / JAL-1 / JCM 10045 / NBRC 100440) (Methanococcus jannaschii).